Here is a 334-residue protein sequence, read N- to C-terminus: Non-functional pseudokinase ZED1 (334 aa).

The Protein kinase domain occupies 49–334 (FSESRIISSW…KELKLIEKLS (286 aa)). ATP is bound by residues 55 to 63 (ISSWGYFIW) and Lys76. Residues Thr125 and Thr177 each carry the O-acetylthreonine modification.

The protein belongs to the protein kinase superfamily. Ser/Thr protein kinase family. ZRK subfamily. As to quaternary structure, interacts with RPP13L4/ZAR1. Component of an immune signaling complex made of, at least, SZE1, BKN2/SZE2, ZAR1 and ZED1. Binds directly to SZE1 at the plasma membrane. In terms of tissue distribution, expressed in seedlings, young leaves, floral organs, shoot apical meristems (SAM) and inflorescence stems.

The protein localises to the cytoplasm. The protein resides in the cytosol. Its subcellular location is the nucleus. It is found in the cell membrane. Functionally, together with RPP13L4/ZAR1, involved in the ambient temperature (above 22 degrees Celsius)-sensitive aerial organ development. Together with RPP13L4/ZAR1, involved in the regulation of the ambient temperature-sensitive intersection of growth and immune response in the absence of pathogens, by repressing the transcription of SNC1. Probable non-functional kinase required for recognition of the Pseudomonas syringae type III effector HopZ1a by RPP13L4/ZAR1 and, together with SZE1 and SZE2, to trigger subsequent defense responses. May function as a decoy to trap HopZ1a in the ZAR1 complex for recognition by the plant immune system. The sequence is that of Non-functional pseudokinase ZED1 from Arabidopsis thaliana (Mouse-ear cress).